The primary structure comprises 993 residues: uncharacterized protein (993 aa).

The N-terminal stretch at 1–28 (MKLFPRSILITLVLSFALNLGIVTKIHA) is a signal peptide. Helical transmembrane passes span 331–351 (IVTA…LLAG), 359–379 (YINF…INIT), 392–412 (MIQW…SWVM), 494–514 (MLVS…AFMV), 521–541 (MISI…FLFA), 554–574 (MISF…MFSV), and 699–719 (IKNI…MYNF). Residues 779–904 (GQGGGASDLE…EKVDSTSKGT (126 aa)) are disordered. A compositionally biased stretch (low complexity) spans 805 to 829 (TSAPAVTTPTASSSVASSSPKTVSS). Positions 838–850 (PPAPTEAVSPPPA) are enriched in pro residues. A compositionally biased stretch (basic and acidic residues) spans 866–879 (IIRDNNQESKKEID).

It belongs to the TrbL/VirB6 family.

The protein resides in the cell membrane. This is an uncharacterized protein from Rickettsia conorii (strain ATCC VR-613 / Malish 7).